We begin with the raw amino-acid sequence, 938 residues long: Isoleucine--tRNA ligase (938 aa).

The short motif at 58–68 (PYANGSIHIGH) is the 'HIGH' region element. Lys-183 bears the N6-acetyllysine mark. Glu-561 contacts L-isoleucyl-5'-AMP. The short motif at 602–606 (KMSKS) is the 'KMSKS' region element. ATP is bound at residue Lys-605. Zn(2+)-binding residues include Cys-901, Cys-904, Cys-921, and Cys-924.

The protein belongs to the class-I aminoacyl-tRNA synthetase family. IleS type 1 subfamily. As to quaternary structure, monomer. It depends on Zn(2+) as a cofactor.

It localises to the cytoplasm. It carries out the reaction tRNA(Ile) + L-isoleucine + ATP = L-isoleucyl-tRNA(Ile) + AMP + diphosphate. Functionally, catalyzes the attachment of isoleucine to tRNA(Ile). As IleRS can inadvertently accommodate and process structurally similar amino acids such as valine, to avoid such errors it has two additional distinct tRNA(Ile)-dependent editing activities. One activity is designated as 'pretransfer' editing and involves the hydrolysis of activated Val-AMP. The other activity is designated 'posttransfer' editing and involves deacylation of mischarged Val-tRNA(Ile). In Escherichia coli O45:K1 (strain S88 / ExPEC), this protein is Isoleucine--tRNA ligase.